We begin with the raw amino-acid sequence, 540 residues long: Anti-sigma-I factor RsgI7 (540 aa).

Positions 1–48 (MRAMVVDMNDKYAVVVNKEGQYIKIKRKAEHRLGYQVELPDRVIGFER) constitute a RsgI N-terminal anti-sigma domain. The Cytoplasmic segment spans residues 1–50 (MRAMVVDMNDKYAVVVNKEGQYIKIKRKAEHRLGYQVELPDRVIGFERRT). Residues 51-73 (LLKVVSVAAALLIVSSISFAVYS) traverse the membrane as a helical segment. Residues 74–540 (YNLPYSYVNV…PGKEILKKRC (467 aa)) lie on the Extracellular side of the membrane. 5 stretches are compositionally biased toward basic and acidic residues: residues 238-256 (DIKK…KKVN), 319-329 (SGIDKGNKDSK), 338-351 (NDVK…KTNS), 359-370 (VSKDNKNDKADG), and 398-419 (SKDD…EDNK). Disordered stretches follow at residues 238–429 (DIKK…CPQY) and 481–540 (QEEQ…KKRC). The stretch at 451–501 (KEDMTKQNDEWFKKMQEEQKKQYDEWLKKMQEEQKKQHDEWVKKMEEMKNT) forms a coiled coil.

As to quaternary structure, interacts (via RsgI N-terminal anti-sigma domain) with SigI7.

Its subcellular location is the cell membrane. In terms of biological role, anti-sigma factor for SigI7. Negatively regulates SigI7 activity through direct interaction. The polypeptide is Anti-sigma-I factor RsgI7 (Acetivibrio thermocellus (strain ATCC 27405 / DSM 1237 / JCM 9322 / NBRC 103400 / NCIMB 10682 / NRRL B-4536 / VPI 7372) (Clostridium thermocellum)).